A 269-amino-acid chain; its full sequence is Troponin T, fast skeletal muscle (269 aa).

A compositionally biased stretch (acidic residues) spans 1-23 (MSDEEVEQVEEQYEEEEEAQEEA). The segment at 1 to 72 (MSDEEVEQVE…EKVDFDDIQK (72 aa)) is disordered. Position 2 is an N-acetylserine (Ser2). Ser2 carries the phosphoserine modification. The segment covering 24–34 (AEVHEEVHEPE) has biased composition (basic and acidic residues). Acidic residues predominate over residues 35–47 (EVQEDTAEEDAEE). The span at 60–72 (PEGEKVDFDDIQK) shows a compositional bias: basic and acidic residues. At Ser88 the chain carries Phosphoserine. Residues 111–153 (RAERAEQQRIRAEKERERQNRLAEEKARREEEDAKRRAEDDLK) are compositionally biased toward basic and acidic residues. Positions 111-158 (RAERAEQQRIRAEKERERQNRLAEEKARREEEDAKRRAEDDLKKKKAL) are disordered. 3 positions are modified to phosphoserine: Ser159, Ser166, and Ser167. The tract at residues 245–269 (RIDQAQKHSKKAGTPAKGKVGGRWK) is disordered.

The protein belongs to the troponin T family. In terms of tissue distribution, in fetal and adult fast skeletal muscles, with a higher level expression in fetal than in adult muscle.

Functionally, troponin T is the tropomyosin-binding subunit of troponin, the thin filament regulatory complex which confers calcium-sensitivity to striated muscle actomyosin ATPase activity. The sequence is that of Troponin T, fast skeletal muscle (TNNT3) from Homo sapiens (Human).